The chain runs to 644 residues: Transcription factor btd (644 aa).

Disordered stretches follow at residues 16-65 (HQAQ…TQQQ) and 101-196 (APPS…AGSP). 2 stretches are compositionally biased toward low complexity: residues 101–119 (APPS…SSPL) and 140–196 (ASPN…AGSP). 3 C2H2-type zinc fingers span residues 333–357 (HICH…LRWH), 363–385 (FLCL…GRTH), and 391–413 (YACP…KKTH). 2 disordered regions span residues 437 to 461 (LEKK…QPDT) and 478 to 537 (TSAG…SSSA). 2 stretches are compositionally biased toward low complexity: residues 499–508 (TTTTSSAAAS) and 521–537 (AIQP…SSSA).

It is found in the nucleus. Its function is as follows. Required for the development of the antennal, intercalary and mandibular segments of the head. The sequence is that of Transcription factor btd (btd) from Drosophila melanogaster (Fruit fly).